Consider the following 231-residue polypeptide: Putative N-acetylmannosamine-6-phosphate 2-epimerase (231 aa).

The protein belongs to the NanE family.

It carries out the reaction an N-acyl-D-glucosamine 6-phosphate = an N-acyl-D-mannosamine 6-phosphate. The protein operates within amino-sugar metabolism; N-acetylneuraminate degradation; D-fructose 6-phosphate from N-acetylneuraminate: step 3/5. Converts N-acetylmannosamine-6-phosphate (ManNAc-6-P) to N-acetylglucosamine-6-phosphate (GlcNAc-6-P). This chain is Putative N-acetylmannosamine-6-phosphate 2-epimerase, found in Listeria monocytogenes serotype 4b (strain CLIP80459).